Consider the following 2439-residue polypeptide: Centrosomal protein of 290 kDa (2439 aa).

Coiled-coil stretches lie at residues 75–913 (AEQA…VVTE) and 1271–1576 (NTML…YMDT). 3 disordered regions span residues 1802–1824 (ETLNKDLQRSQKSQNKLQSEKEA), 1867–1890 (ELDRKSISEPADKRSTLKEDKSSK), and 2017–2048 (ESRLSKEPPSRPSTSGRGSDTPSQREHEFQKE). Residues 2039–2048 (SQREHEFQKE) show a composition bias toward basic and acidic residues. Residues 2046-2394 (QKENLRLSTE…KLTQELKHFD (349 aa)) are a coiled coil.

As to quaternary structure, part of the tectonic-like complex (also named B9 complex).

Its subcellular location is the cytoplasm. The protein resides in the cytoskeleton. It localises to the microtubule organizing center. It is found in the centrosome. The protein localises to the centriolar satellite. Its subcellular location is the nucleus. The protein resides in the cilium basal body. Functionally, involved in early and late steps in cilia formation. May play a role in early ciliogenesis in the disappearance of centriolar satellites and in the transition of primary ciliar vesicles (PCVs) to capped ciliary vesicles (CCVs). In the ciliary transition zone is part of the tectonic-like complex which is required for tissue-specific ciliogenesis and may regulate ciliary membrane composition. Involved in regulation of the BBSome complex integrity and in ciliary targeting of selected BBSome cargos. Required for the correct localization of ciliary and phototransduction proteins in retinal photoreceptor cells; may play a role in ciliary transport processes. Involved in development of the nervous system and kidney. This chain is Centrosomal protein of 290 kDa (cep290), found in Danio rerio (Zebrafish).